The chain runs to 346 residues: DNA-directed RNA polymerase subunit alpha (346 aa).

The segment at Met1–Glu243 is alpha N-terminal domain (alpha-NTD). The alpha C-terminal domain (alpha-CTD) stretch occupies residues Leu260–Ala346.

The protein belongs to the RNA polymerase alpha chain family. As to quaternary structure, homodimer. The RNAP catalytic core consists of 2 alpha, 1 beta, 1 beta' and 1 omega subunit. When a sigma factor is associated with the core the holoenzyme is formed, which can initiate transcription.

It carries out the reaction RNA(n) + a ribonucleoside 5'-triphosphate = RNA(n+1) + diphosphate. Its function is as follows. DNA-dependent RNA polymerase catalyzes the transcription of DNA into RNA using the four ribonucleoside triphosphates as substrates. This Sorangium cellulosum (strain So ce56) (Polyangium cellulosum (strain So ce56)) protein is DNA-directed RNA polymerase subunit alpha.